The sequence spans 531 residues: Maturase K (531 aa).

This sequence belongs to the intron maturase 2 family. MatK subfamily.

It localises to the plastid. The protein resides in the chloroplast. In terms of biological role, usually encoded in the trnK tRNA gene intron. Probably assists in splicing its own and other chloroplast group II introns. This is Maturase K from Ephedra sinica (Chinese ephedra).